Reading from the N-terminus, the 166-residue chain is Deglycase PfpI (166 aa).

One can recognise a PfpI endopeptidase domain in the interval 1–166 (MKILFLSANE…WMREFVKLLK (166 aa)). Residue C100 is the Nucleophile of the active site. H101 is a catalytic residue.

The protein belongs to the peptidase C56 family. Homooligomer. Exists in two functional species: the predominant form is a homohexamer that comprises about 90% of the total activity, and the minor form is trimeric.

It localises to the cytoplasm. It catalyses the reaction N(omega)-(1-hydroxy-2-oxopropyl)-L-arginyl-[protein] + H2O = lactate + L-arginyl-[protein] + H(+). The enzyme catalyses N(6)-(1-hydroxy-2-oxopropyl)-L-lysyl-[protein] + H2O = lactate + L-lysyl-[protein] + H(+). The catalysed reaction is S-(1-hydroxy-2-oxopropyl)-L-cysteinyl-[protein] + H2O = lactate + L-cysteinyl-[protein] + H(+). It carries out the reaction N(omega)-(1-hydroxy-2-oxoethyl)-L-arginyl-[protein] + H2O = L-arginyl-[protein] + glycolate + H(+). It catalyses the reaction N(6)-(1-hydroxy-2-oxoethyl)-L-lysyl-[protein] + H2O = glycolate + L-lysyl-[protein] + H(+). The enzyme catalyses S-(1-hydroxy-2-oxoethyl)-L-cysteinyl-[protein] + H2O = glycolate + L-cysteinyl-[protein] + H(+). Its function is as follows. Deglycase that catalyzes the deglycation of the Maillard adducts formed between amino groups of proteins and reactive carbonyl groups of glyoxals. Thus, functions as a protein deglycase that repairs methylglyoxal- and glyoxal-glycated proteins, and releases repaired proteins and lactate or glycolate, respectively. Deglycates cysteine, arginine and lysine residues in proteins, and thus reactivates these proteins by reversing glycation by glyoxals. Thus, was shown to afford full protection against glycation of thioredoxin by glyoxal. Acts on early glycation intermediates (hemithioacetals and aminocarbinols), preventing the formation of advanced glycation endproducts (AGE) that cause irreversible damage. Prevents acrylamide formation in asparagine/glyoxal and asparagine/sugar mixtures, likely by degrading asparagine/glyoxal Maillard adducts formed at high temperatures. Also displays proteolytic activity. Cleaves at the carboxyl side of both basic and hydrophobic residues in the P1 position, indicating trypsin- and chymotrypsin-like specificities. This is Deglycase PfpI from Pyrococcus furiosus (strain ATCC 43587 / DSM 3638 / JCM 8422 / Vc1).